A 457-amino-acid polypeptide reads, in one-letter code: MGSRFLLVLLSGASCPPCPKYASCHNSTHCTCEDGFRARSGRTYFHDSSEKCEDINECETGLAKCKYKAYCRNKVGGYICSCLVKYTLFNFLAGIIDYDHPDCYENNSQGTTQSNVDIWVSGVKPGFGKQLPGDKRTKHICVYWEGSEGGWSTEGCSHVHSNGSYTKCKCFHLSSFAVLVALAPKEDPVLTVITQVGLTISLLCLFLAILTFLLCRPIQNTSTSLHLELSLCLFLAHLLFLTGINRTEPEVLCSIIAGLLHFLYLACFTWMLLEGLHLFLTVRNLKVANYTSTGRFKKRFMYPVGYGIPAVIIAVSAIVGPQNYGTFTCWLKLDKGFIWSFMGPVAVIILINLVFYFQVLWILRSKLSSLNKEVSTIQDTRVMTFKAISQLFILGCSWGLGFFMVEEVGKTIGSIIAYSFTIINTLQGVLLFVVHCLLNRQVRLIILSVISLVPKSN.

The signal sequence occupies residues 1-14 (MGSRFLLVLLSGAS). 6 disulfide bridges follow: Cys-15–Cys-24, Cys-18–Cys-30, Cys-32–Cys-52, Cys-58–Cys-71, Cys-65–Cys-80, and Cys-82–Cys-103. An EGF-like 1 domain is found at 15-53 (CPPCPKYASCHNSTHCTCEDGFRARSGRTYFHDSSEKCE). Topologically, residues 16–191 (PPCPKYASCH…LAPKEDPVLT (176 aa)) are extracellular. An N-linked (GlcNAc...) asparagine glycan is attached at Asn-26. The EGF-like 2; calcium-binding domain maps to 54 to 104 (DINECETGLAKCKYKAYCRNKVGGYICSCLVKYTLFNFLAGIIDYDHPDCY). Residues Asn-106 and Asn-162 are each glycosylated (N-linked (GlcNAc...) asparagine). Positions 134-186 (DKRTKHICVYWEGSEGGWSTEGCSHVHSNGSYTKCKCFHLSSFAVLVALAPKE) constitute a GAIN-B domain. Cystine bridges form between Cys-141/Cys-168 and Cys-156/Cys-170. The tract at residues 141-186 (CVYWEGSEGGWSTEGCSHVHSNGSYTKCKCFHLSSFAVLVALAPKE) is GPS. A helical transmembrane segment spans residues 192-212 (VITQVGLTISLLCLFLAILTF). Residues 213–223 (LLCRPIQNTST) are Cytoplasmic-facing. The chain crosses the membrane as a helical span at residues 224–244 (SLHLELSLCLFLAHLLFLTGI). Residue Asn-245 is glycosylated (N-linked (GlcNAc...) asparagine). Topologically, residues 245–250 (NRTEPE) are extracellular. A helical transmembrane segment spans residues 251 to 271 (VLCSIIAGLLHFLYLACFTWM). Topologically, residues 272–299 (LLEGLHLFLTVRNLKVANYTSTGRFKKR) are cytoplasmic. The chain crosses the membrane as a helical span at residues 300 to 320 (FMYPVGYGIPAVIIAVSAIVG). Topologically, residues 321–336 (PQNYGTFTCWLKLDKG) are extracellular. Residues 337–357 (FIWSFMGPVAVIILINLVFYF) form a helical membrane-spanning segment. The Cytoplasmic portion of the chain corresponds to 358–384 (QVLWILRSKLSSLNKEVSTIQDTRVMT). A helical membrane pass occupies residues 385–405 (FKAISQLFILGCSWGLGFFMV). At 406–413 (EEVGKTIG) the chain is on the extracellular side. Residues 414–434 (SIIAYSFTIINTLQGVLLFVV) traverse the membrane as a helical segment. Residues 435–457 (HCLLNRQVRLIILSVISLVPKSN) lie on the Cytoplasmic side of the membrane.

It belongs to the G-protein coupled receptor 2 family. Adhesion G-protein coupled receptor (ADGR) subfamily. Forms a heterodimer, consisting of a large extracellular region (alpha subunit) non-covalently linked to a seven-transmembrane moiety (beta subunit). Glycosylated. Post-translationally, proteolytically cleaved into 2 subunits, an extracellular alpha subunit and a seven-transmembrane subunit.

The protein resides in the cell membrane. The protein localises to the secreted. In terms of biological role, may mediate the cellular interaction between myeloid cells and B-cells. The polypeptide is Putative adhesion G protein-coupled receptor E4P (Homo sapiens (Human)).